Reading from the N-terminus, the 361-residue chain is tRNA 2-selenouridine synthase (361 aa).

In terms of domain architecture, Rhodanese spans 11–134 (LIADTPLIDV…LRQTAIQATW (124 aa)). The active-site S-selanylcysteine intermediate is Cys-94.

This sequence belongs to the SelU family. As to quaternary structure, monomer.

It catalyses the reaction 5-methylaminomethyl-2-thiouridine(34) in tRNA + selenophosphate + (2E)-geranyl diphosphate + H2O + H(+) = 5-methylaminomethyl-2-selenouridine(34) in tRNA + (2E)-thiogeraniol + phosphate + diphosphate. The catalysed reaction is 5-methylaminomethyl-2-thiouridine(34) in tRNA + (2E)-geranyl diphosphate = 5-methylaminomethyl-S-(2E)-geranyl-thiouridine(34) in tRNA + diphosphate. It carries out the reaction 5-methylaminomethyl-S-(2E)-geranyl-thiouridine(34) in tRNA + selenophosphate + H(+) = 5-methylaminomethyl-2-(Se-phospho)selenouridine(34) in tRNA + (2E)-thiogeraniol. The enzyme catalyses 5-methylaminomethyl-2-(Se-phospho)selenouridine(34) in tRNA + H2O = 5-methylaminomethyl-2-selenouridine(34) in tRNA + phosphate. Involved in the post-transcriptional modification of the uridine at the wobble position (U34) of tRNA(Lys), tRNA(Glu) and tRNA(Gln). Catalyzes the conversion of 2-thiouridine (S2U-RNA) to 2-selenouridine (Se2U-RNA). Acts in a two-step process involving geranylation of 2-thiouridine (S2U) to S-geranyl-2-thiouridine (geS2U) and subsequent selenation of the latter derivative to 2-selenouridine (Se2U) in the tRNA chain. This chain is tRNA 2-selenouridine synthase, found in Salmonella arizonae (strain ATCC BAA-731 / CDC346-86 / RSK2980).